The primary structure comprises 235 residues: NAD(P)H-quinone oxidoreductase subunit K, chloroplastic (235 aa).

The [4Fe-4S] cluster site is built by cysteine 43, cysteine 44, cysteine 108, and cysteine 139.

Belongs to the complex I 20 kDa subunit family. In terms of assembly, NDH is composed of at least 16 different subunits, 5 of which are encoded in the nucleus. Requires [4Fe-4S] cluster as cofactor.

The protein localises to the plastid. It is found in the chloroplast thylakoid membrane. It carries out the reaction a plastoquinone + NADH + (n+1) H(+)(in) = a plastoquinol + NAD(+) + n H(+)(out). It catalyses the reaction a plastoquinone + NADPH + (n+1) H(+)(in) = a plastoquinol + NADP(+) + n H(+)(out). Its function is as follows. NDH shuttles electrons from NAD(P)H:plastoquinone, via FMN and iron-sulfur (Fe-S) centers, to quinones in the photosynthetic chain and possibly in a chloroplast respiratory chain. The immediate electron acceptor for the enzyme in this species is believed to be plastoquinone. Couples the redox reaction to proton translocation, and thus conserves the redox energy in a proton gradient. The protein is NAD(P)H-quinone oxidoreductase subunit K, chloroplastic of Ipomoea purpurea (Common morning glory).